Consider the following 218-residue polypeptide: Glutathione S-transferase Mu 2 (218 aa).

Residues 2–88 (PMTLGYWDIR…YLARKHNLCG (87 aa)) form the GST N-terminal domain. 7–8 (YW) serves as a coordination point for glutathione. 2 positions are modified to phosphoserine: serine 27 and serine 44. Glutathione contacts are provided by residues 43 to 46 (RSQW), lysine 50, 59 to 60 (NL), and 72 to 73 (QS). In terms of domain architecture, GST C-terminal spans 90 to 208 (TEEERIRVDI…KSSRFLSKPI (119 aa)). Tyrosine 116 contacts substrate. A Phosphoserine modification is found at serine 117.

It belongs to the GST superfamily. Mu family. As to quaternary structure, homodimer.

The protein resides in the cytoplasm. The enzyme catalyses RX + glutathione = an S-substituted glutathione + a halide anion + H(+). It catalyses the reaction 11(S)-hydroxy-14(S),15(S)-epoxy-(5Z,8Z,12E)-eicosatrienoate + glutathione = (11S,15S)-dihydroxy-14(R)-S-glutathionyl-(5Z,8Z,12E)-eicosatrienoate. In terms of biological role, conjugation of reduced glutathione to a wide number of exogenous and endogenous hydrophobic electrophiles. Participates in the formation of novel hepoxilin regioisomers. The polypeptide is Glutathione S-transferase Mu 2 (Mus musculus (Mouse)).